The sequence spans 288 residues: MFVLPPPQEPLLGAHTSAAGGLHNALYEGRDIGATTIQLFTANQRQWKRRSLTQNMIEQFQTALDETSLSYIMSHAGYLNNPGAPNPEILEKTRICMYQEIADCIALGISFVNFHPGAALSDSKESCLDRAITSFSQMAPLFETNPPLVVLLETTAGQGSLIGSSFEELAYLIQGIKAHIPVGVCLDTCHIFAAGYDISSPEGWEQVLKHFDEVIGLSFLRAIHLNDSIFPLGKNKDRHAPIGEGCIGSESFCFLMRDERTRKLPKYLETPGGPDLWTKEIRYLQKVS.

Histidine 75, histidine 115, glutamate 153, aspartate 187, histidine 190, histidine 224, aspartate 237, histidine 239, and glutamate 269 together coordinate Zn(2+).

It belongs to the AP endonuclease 2 family. The cofactor is Zn(2+).

The enzyme catalyses Endonucleolytic cleavage to 5'-phosphooligonucleotide end-products.. Endonuclease IV plays a role in DNA repair. It cleaves phosphodiester bonds at apurinic or apyrimidinic (AP) sites, generating a 3'-hydroxyl group and a 5'-terminal sugar phosphate. In Chlamydia muridarum (strain MoPn / Nigg), this protein is Probable endonuclease 4.